The following is a 241-amino-acid chain: Leucyl/phenylalanyl-tRNA--protein transferase (241 aa).

This sequence belongs to the L/F-transferase family.

The protein localises to the cytoplasm. It carries out the reaction N-terminal L-lysyl-[protein] + L-leucyl-tRNA(Leu) = N-terminal L-leucyl-L-lysyl-[protein] + tRNA(Leu) + H(+). The catalysed reaction is N-terminal L-arginyl-[protein] + L-leucyl-tRNA(Leu) = N-terminal L-leucyl-L-arginyl-[protein] + tRNA(Leu) + H(+). It catalyses the reaction L-phenylalanyl-tRNA(Phe) + an N-terminal L-alpha-aminoacyl-[protein] = an N-terminal L-phenylalanyl-L-alpha-aminoacyl-[protein] + tRNA(Phe). In terms of biological role, functions in the N-end rule pathway of protein degradation where it conjugates Leu, Phe and, less efficiently, Met from aminoacyl-tRNAs to the N-termini of proteins containing an N-terminal arginine or lysine. The chain is Leucyl/phenylalanyl-tRNA--protein transferase from Neisseria meningitidis serogroup C / serotype 2a (strain ATCC 700532 / DSM 15464 / FAM18).